We begin with the raw amino-acid sequence, 316 residues long: Ribonuclease Z (316 aa).

Positions 61, 63, 65, 66, 152, 220, and 279 each coordinate Zn(2+). D65 acts as the Proton acceptor in catalysis.

The protein belongs to the RNase Z family. As to quaternary structure, homodimer. The cofactor is Zn(2+).

It carries out the reaction Endonucleolytic cleavage of RNA, removing extra 3' nucleotides from tRNA precursor, generating 3' termini of tRNAs. A 3'-hydroxy group is left at the tRNA terminus and a 5'-phosphoryl group is left at the trailer molecule.. Its function is as follows. Zinc phosphodiesterase, which displays some tRNA 3'-processing endonuclease activity. Probably involved in tRNA maturation, by removing a 3'-trailer from precursor tRNA. This Clostridium perfringens (strain ATCC 13124 / DSM 756 / JCM 1290 / NCIMB 6125 / NCTC 8237 / Type A) protein is Ribonuclease Z.